A 581-amino-acid chain; its full sequence is Proline--tRNA ligase (581 aa).

The protein belongs to the class-II aminoacyl-tRNA synthetase family. ProS type 1 subfamily. In terms of assembly, homodimer.

The protein resides in the cytoplasm. The enzyme catalyses tRNA(Pro) + L-proline + ATP = L-prolyl-tRNA(Pro) + AMP + diphosphate. Catalyzes the attachment of proline to tRNA(Pro) in a two-step reaction: proline is first activated by ATP to form Pro-AMP and then transferred to the acceptor end of tRNA(Pro). As ProRS can inadvertently accommodate and process non-cognate amino acids such as alanine and cysteine, to avoid such errors it has two additional distinct editing activities against alanine. One activity is designated as 'pretransfer' editing and involves the tRNA(Pro)-independent hydrolysis of activated Ala-AMP. The other activity is designated 'posttransfer' editing and involves deacylation of mischarged Ala-tRNA(Pro). The misacylated Cys-tRNA(Pro) is not edited by ProRS. This chain is Proline--tRNA ligase, found in Blochmanniella floridana.